A 458-amino-acid chain; its full sequence is MSFNFLKDNNKKVHFIGIGGISMSGLAEILLNSGYRVSGSDRSESDLTKHLQAKGAEIYIGHNGNNLKDVDLVVYTAAIPDSNPELVKARECNIQTMDRAEFLGHVMQGHKYNIAISGTHGKTTTTSMFSHISLSANLDPTILVGGNLDVINGNVRVGNSEYFVTEACEYKASFLKFYPYIGVILNIEADHLDFYKDINDIQNTFLKFAKLIPNDGFLIVNADDKRCVEVSKQVDCNVITFGINNGDVRAKNIVFNNGRPTFDVYRNEEKLFTLTLNVPGNHNILDALASISSALSLNVPVDSIIEGLSTFNGAHRRFEIKGKVDGITVVDDYAHHPTEIKAALNAAKNFPHKRVFCVFQPHTYSRTISLFDDFANSFSNADTLVLADIYAAREKDTGVVSSTMLGDKIRENGVNCKNLHSFEDIVTFLKGELKDGDLLITIGAGDVYRVGEMFLEAK.

Position 118-124 (118-124 (GTHGKTT)) interacts with ATP.

This sequence belongs to the MurCDEF family.

Its subcellular location is the cytoplasm. The enzyme catalyses UDP-N-acetyl-alpha-D-muramate + L-alanine + ATP = UDP-N-acetyl-alpha-D-muramoyl-L-alanine + ADP + phosphate + H(+). Its pathway is cell wall biogenesis; peptidoglycan biosynthesis. Cell wall formation. This chain is UDP-N-acetylmuramate--L-alanine ligase, found in Clostridium novyi (strain NT).